The sequence spans 257 residues: 14-3-3-like protein GF14-G (257 aa).

This sequence belongs to the 14-3-3 family.

Is associated with a DNA binding complex that binds to the G box, a well-characterized cis-acting DNA regulatory element found in plant genes. This Oryza sativa subsp. japonica (Rice) protein is 14-3-3-like protein GF14-G (GF14G).